A 441-amino-acid chain; its full sequence is Cobyrinate a,c-diamide synthase (441 aa).

Residues 243–434 (TVAVADDAAF…AHVHPESTAF (192 aa)) enclose the GATase cobBQ-type domain. Residue Cys323 is the Nucleophile of the active site.

This sequence belongs to the CobB/CbiA family. Mg(2+) is required as a cofactor.

It catalyses the reaction cob(II)yrinate + 2 L-glutamine + 2 ATP + 2 H2O = cob(II)yrinate a,c diamide + 2 L-glutamate + 2 ADP + 2 phosphate + 2 H(+). It functions in the pathway cofactor biosynthesis; adenosylcobalamin biosynthesis; cob(II)yrinate a,c-diamide from sirohydrochlorin (anaerobic route): step 10/10. Functionally, catalyzes the ATP-dependent amidation of the two carboxylate groups at positions a and c of cobyrinate, using either L-glutamine or ammonia as the nitrogen source. The protein is Cobyrinate a,c-diamide synthase of Halobacterium salinarum (strain ATCC 700922 / JCM 11081 / NRC-1) (Halobacterium halobium).